The sequence spans 332 residues: UPF0194 membrane protein YbhG (332 aa).

The N-terminal stretch at 1 to 16 (MMKKPVVIGLAVVVLA) is a signal peptide. Residues 108–211 (EEIAQAAAAV…LQDSTLVAPS (104 aa)) adopt a coiled-coil conformation.

This sequence belongs to the UPF0194 family.

It localises to the periplasm. The polypeptide is UPF0194 membrane protein YbhG (Escherichia coli O6:H1 (strain CFT073 / ATCC 700928 / UPEC)).